A 130-amino-acid polypeptide reads, in one-letter code: Large ribosomal subunit protein bL19 (130 aa).

This sequence belongs to the bacterial ribosomal protein bL19 family.

Functionally, this protein is located at the 30S-50S ribosomal subunit interface and may play a role in the structure and function of the aminoacyl-tRNA binding site. The protein is Large ribosomal subunit protein bL19 of Methylorubrum populi (strain ATCC BAA-705 / NCIMB 13946 / BJ001) (Methylobacterium populi).